The chain runs to 249 residues: 2,3-bisphosphoglycerate-dependent phosphoglycerate mutase (249 aa).

Substrate contacts are provided by residues 8–15 (RHGESVWN), 21–22 (TG), Arg60, 87–90 (ERHY), Lys98, 114–115 (RR), and 183–184 (GN). The active-site Tele-phosphohistidine intermediate is the His9. Glu87 acts as the Proton donor/acceptor in catalysis.

The protein belongs to the phosphoglycerate mutase family. BPG-dependent PGAM subfamily.

It catalyses the reaction (2R)-2-phosphoglycerate = (2R)-3-phosphoglycerate. It participates in carbohydrate degradation; glycolysis; pyruvate from D-glyceraldehyde 3-phosphate: step 3/5. Its function is as follows. Catalyzes the interconversion of 2-phosphoglycerate and 3-phosphoglycerate. This chain is 2,3-bisphosphoglycerate-dependent phosphoglycerate mutase, found in Endomicrobium trichonymphae.